The sequence spans 733 residues: Exosome complex exonuclease RRP6 (733 aa).

Residue serine 138 is modified to Phosphoserine. Residues 214 to 380 enclose the 3'-5' exonuclease domain; that stretch reads IWVDTSTELE…NIYDQLRNKL (167 aa). Mn(2+) is bound by residues aspartate 238 and glutamate 240. Residues aspartate 238 and glutamate 240 each coordinate Zn(2+). 2 residues coordinate AMP: glutamate 240 and histidine 241. UMP contacts are provided by glutamate 240 and histidine 241. Aspartate 296 serves as a coordination point for Mn(2+). Positions 299, 342, and 345 each coordinate AMP. UMP contacts are provided by tryptophan 299, lysine 342, and glutamine 345. Aspartate 365 lines the Mn(2+) pocket. Aspartate 365 is a binding site for Zn(2+). Residues 435–515 form the HRDC domain; the sequence is PPEREVLVRE…RDALRNIKNT (81 aa). Position 520 is a phosphothreonine (threonine 520). Serine 640 and serine 645 each carry phosphoserine. The segment at 662–733 is disordered; sequence IQKKQPAKEK…AKGKNLSFKR (72 aa). A compositionally biased stretch (basic and acidic residues) spans 667-680; sequence PAKEKGVTEKDAVD. Polar residues predominate over residues 687-697; the sequence is ILSNKPGQNNR. 2 short sequence motifs (nuclear localization signal) span residues 700 to 704 and 718 to 721; these read KKRRF and KKRR. Residues 716–733 show a composition bias toward basic residues; sequence AAKKRRPAAKGKNLSFKR.

The protein belongs to the exosome component 10/RRP6 family. As to quaternary structure, component of the RNA exosome complex. Specifically part of the catalytically inactive RNA exosome core complex (Exo-9) which may associate with the catalytic subunits RRP6 and DIS3 in cytoplasmic- and nuclear-specific RNA exosome complex forms. Exo-9 is formed by a hexameric base ring of RNase PH domain-containing subunits and a cap ring consisting of CSL4, RRP4 and RRP40. RRP6 specifically is part of the nuclear form of the RNA exosome complex; the association appears to be mediated by Exo-9 and not by DIS3. Interacts with LRP1. Interacts with NPL3, NOP53 and PAP1.

Its subcellular location is the nucleus. It localises to the nucleolus. Functionally, nuclear-specific catalytic component of the RNA exosome complex which has 3'-&gt;5' exoribonuclease activity and participates in a multitude of cellular RNA processing and degradation events. In the nucleus, the RNA exosome complex is involved in proper maturation of stable RNA species such as rRNA, snRNA and snoRNA, in the elimination of RNA processing by-products and non-coding 'pervasive' transcripts, such as antisense RNA species and cryptic unstable transcripts (CUTs), and of mRNAs with processing defects, thereby limiting or excluding their export to the cytoplasm. The catalytic inactive RNA exosome core complex of 9 subunits (Exo-9) is proposed to play a pivotal role in the binding and presentation of RNA for ribonucleolysis, and to serve as a scaffold for the association with catalytic subunits and accessory proteins or complexes. RRP6 has 3'-5' exonuclease activity which is not modulated upon association with Exo-9 suggesting that the complex inner RNA-binding path is not used to access its active site. This chain is Exosome complex exonuclease RRP6 (RRP6), found in Saccharomyces cerevisiae (strain ATCC 204508 / S288c) (Baker's yeast).